A 313-amino-acid polypeptide reads, in one-letter code: MSSREIRIATRQSALALWQAEYVKARLEQAHPDLTVTLLPMTSRGDKLLDAPLAKIGGKGLFVKELETALLEGAADIAVHSMKDVPMDFPEGLGLYTICEREDPRDAFVSNTYASLDQLPAGSVVGTSSLRRQAQLLARRPDLQIRFLRGNVNTRLAKLDAGEYDAIILAAAGLIRLGFESRIRSSISVDDSLPAGGQGAVGIECRTADADLHALLAPLHHADTALRVTAERALNKRLNGGCQVPIACYAIREGDQLWLRGLVGQPDGSQLLRAEGRAPLAQAEALGVQVADDLLAQGAEAILAAVYGEAGHP.

S-(dipyrrolylmethanemethyl)cysteine is present on Cys-242.

It belongs to the HMBS family. Monomer. Dipyrromethane is required as a cofactor.

It catalyses the reaction 4 porphobilinogen + H2O = hydroxymethylbilane + 4 NH4(+). It participates in porphyrin-containing compound metabolism; protoporphyrin-IX biosynthesis; coproporphyrinogen-III from 5-aminolevulinate: step 2/4. Functionally, tetrapolymerization of the monopyrrole PBG into the hydroxymethylbilane pre-uroporphyrinogen in several discrete steps. The chain is Porphobilinogen deaminase from Pseudomonas paraeruginosa (strain DSM 24068 / PA7) (Pseudomonas aeruginosa (strain PA7)).